We begin with the raw amino-acid sequence, 272 residues long: Type III pantothenate kinase (272 aa).

Asp6–Val13 lines the ATP pocket. Residue Gly109 to Arg112 participates in substrate binding. Residue Asp111 is the Proton acceptor of the active site. A K(+)-binding site is contributed by Asp131. Ser134 is an ATP binding site. Thr186 is a substrate binding site.

This sequence belongs to the type III pantothenate kinase family. In terms of assembly, homodimer. The cofactor is NH4(+). Requires K(+) as cofactor.

It localises to the cytoplasm. It catalyses the reaction (R)-pantothenate + ATP = (R)-4'-phosphopantothenate + ADP + H(+). The protein operates within cofactor biosynthesis; coenzyme A biosynthesis; CoA from (R)-pantothenate: step 1/5. In terms of biological role, catalyzes the phosphorylation of pantothenate (Pan), the first step in CoA biosynthesis. This Mycobacterium marinum (strain ATCC BAA-535 / M) protein is Type III pantothenate kinase.